We begin with the raw amino-acid sequence, 652 residues long: Pesticidal crystal protein Cry3Bb (652 aa).

The segment covering 1-12 (MNPNNRSEHDTI) has biased composition (basic and acidic residues). Disordered regions lie at residues 1–33 (MNPN…ADNP) and 433–465 (KNET…ETTD). The span at 14-33 (VTPNSELQTNHNQYPLADNP) shows a compositional bias: polar residues.

Belongs to the delta endotoxin family. In terms of assembly, monomer.

Promotes colloidosmotic lysis by binding to the midgut epithelial cells of Coleoptera. Has moderate level of toxicity to southern corn rootworm. This Bacillus thuringiensis protein is Pesticidal crystal protein Cry3Bb (cry3Bb).